The following is a 294-amino-acid chain: Beta-glucoside kinase (294 aa).

A5–T11 is an ATP binding site.

The protein belongs to the ROK (NagC/XylR) family.

It carries out the reaction D-cellobiose + ATP = 6-phospho-beta-D-glucosyl-(1-&gt;4)-D-glucose + ADP + H(+). Functionally, catalyzes the ATP-dependent phosphorylation of cellobiose to produce cellobiose-6'-P. May have a dual role of kinase and transcriptional regulator of the cellobiose-PTS operon. This Listeria innocua serovar 6a (strain ATCC BAA-680 / CLIP 11262) protein is Beta-glucoside kinase (bglK).